A 251-amino-acid chain; its full sequence is Probable transcriptional regulatory protein Francci3_1368 (251 aa).

This sequence belongs to the TACO1 family.

The protein resides in the cytoplasm. In Frankia casuarinae (strain DSM 45818 / CECT 9043 / HFP020203 / CcI3), this protein is Probable transcriptional regulatory protein Francci3_1368.